The chain runs to 256 residues: Adenosine 5'-phosphosulfate reductase (256 aa).

[4Fe-4S] cluster contacts are provided by Cys120, Cys121, Cys203, and Cys206. The Nucleophile; cysteine thiosulfonate intermediate role is filled by Cys231.

This sequence belongs to the PAPS reductase family. CysH subfamily. The cofactor is [4Fe-4S] cluster.

Its subcellular location is the cytoplasm. It catalyses the reaction [thioredoxin]-disulfide + sulfite + AMP + 2 H(+) = adenosine 5'-phosphosulfate + [thioredoxin]-dithiol. The protein operates within sulfur metabolism; hydrogen sulfide biosynthesis; sulfite from sulfate. Catalyzes the formation of sulfite from adenosine 5'-phosphosulfate (APS) using thioredoxin as an electron donor. This Allochromatium vinosum (strain ATCC 17899 / DSM 180 / NBRC 103801 / NCIMB 10441 / D) (Chromatium vinosum) protein is Adenosine 5'-phosphosulfate reductase.